We begin with the raw amino-acid sequence, 593 residues long: MASFSQLASSPEEPDFERRFLRYRGEDTSPTGRREIWGWYAYGVAAEVFAVCGVGSFLPLTLEQLAREQGFLSSSHLPCVGPDAPPAAGNGTAPANEACVVPLMGLEINTASFAMYTFSLAVLIQALTLVSFSALADYENNRKALLLAFGFIGSATSMLFMLIVPPVFVLGALLVVIGVTCLGSSFVVLNSFLPILVANDPSVQRASNKNKDDLHDLHTEGDEFSLRSWTDEEDTGDHAGPAGSKKAVEPEKASSSTSPELQLSTRISSRGVGLGYCAAVLVQILSILLLFTLSKTSMGKSHPTLPLRFVLLLVGIWWAAFTVVCSRWLRSRPGPPLEGVTPGAGYRQKWRVWLRVVGFAWKSLWNTIKVALRLREVVVFLAAWFLISDAIATVSGTAILFARTELHLSTVSVGLLSITATMSGMAGAFLWPIVARRFALASNHTILLCIALFEIIPLYGMLAYIPFIRNWGVLGLQKPWEIFPLGIVHGVVSGGLASYCRSLFGELIPPGSEAAFYALYAATDKGSSFVGPAIVGALIDATGSVRSGFIFIGVLILLPMPLVWLVNAERGRQDAIAMVKHAPNSEEGEGLLR.

The helical transmembrane segment at 42-62 threads the bilayer; that stretch reads YGVAAEVFAVCGVGSFLPLTL. Asn-90 carries an N-linked (GlcNAc...) asparagine glycan. 3 helical membrane passes run 112-132, 159-179, and 181-201; these read SFAM…LVSF, LFML…VIGV, and CLGS…ANDP. Residues 228 to 261 form a disordered region; it reads SWTDEEDTGDHAGPAGSKKAVEPEKASSSTSPEL. A run of 4 helical transmembrane segments spans residues 271 to 291, 305 to 325, 377 to 397, and 415 to 435; these read GVGL…LLLF, LPLR…TVVC, VVVF…VSGT, and LLSI…PIVA. An N-linked (GlcNAc...) asparagine glycan is attached at Asn-443. 4 helical membrane passes run 448 to 468, 480 to 500, 525 to 545, and 548 to 568; these read LCIA…IPFI, WEIF…ASYC, KGSS…TGSV, and GFIF…LVNA.

This sequence belongs to the ATG22 family.

It localises to the vacuole membrane. Functionally, vacuolar effluxer which mediate the efflux of amino acids resulting from autophagic degradation. The release of autophagic amino acids allows the maintenance of protein synthesis and viability during nitrogen starvation. This Emericella nidulans (strain FGSC A4 / ATCC 38163 / CBS 112.46 / NRRL 194 / M139) (Aspergillus nidulans) protein is Autophagy-related protein 22-2 (atg22-2).